The following is a 228-amino-acid chain: UPF0173 metal-dependent hydrolase Tpen_1493 (228 aa).

Belongs to the UPF0173 family.

The sequence is that of UPF0173 metal-dependent hydrolase Tpen_1493 from Thermofilum pendens (strain DSM 2475 / Hrk 5).